Reading from the N-terminus, the 127-residue chain is Aspartate 1-decarboxylase (127 aa).

Residue Ser25 is the Schiff-base intermediate with substrate; via pyruvic acid of the active site. Pyruvic acid (Ser) is present on Ser25. Thr57 lines the substrate pocket. Residue Tyr58 is the Proton donor of the active site. 73–75 (GAA) serves as a coordination point for substrate.

The protein belongs to the PanD family. In terms of assembly, heterooctamer of four alpha and four beta subunits. Pyruvate is required as a cofactor. Post-translationally, is synthesized initially as an inactive proenzyme, which is activated by self-cleavage at a specific serine bond to produce a beta-subunit with a hydroxyl group at its C-terminus and an alpha-subunit with a pyruvoyl group at its N-terminus.

The protein resides in the cytoplasm. The catalysed reaction is L-aspartate + H(+) = beta-alanine + CO2. The protein operates within cofactor biosynthesis; (R)-pantothenate biosynthesis; beta-alanine from L-aspartate: step 1/1. In terms of biological role, catalyzes the pyruvoyl-dependent decarboxylation of aspartate to produce beta-alanine. This is Aspartate 1-decarboxylase from Neisseria meningitidis serogroup A / serotype 4A (strain DSM 15465 / Z2491).